A 169-amino-acid polypeptide reads, in one-letter code: Centrin-1 (169 aa).

An essential for homooligomerization region spans residues 1–21 (MHSRKGASSLPRGRGAGKKTE). Residues 1 to 25 (MHSRKGASSLPRGRGAGKKTELTEE) are disordered. EF-hand domains are found at residues 25–60 (EQRQ…LGFE), 61–96 (PKKE…KMAE), 98–133 (DPRE…LGEN), and 134–169 (LTDE…TNLF). 10 residues coordinate Ca(2+): D38, D40, S42, C44, E49, D74, D76, T78, S80, and E85.

The protein belongs to the centrin family. Monomer. Homooligomerizes in a Ca(2+)-dependent manner. Interaction via the C-terminus with other proteins disrupts and/or prevents homooligomerization. Interacts with SFI1.

It is found in the cytoplasm. The protein localises to the cytoskeleton. The protein resides in the microtubule organizing center. It localises to the centrosome. In terms of biological role, acts as a calcium sensor. Part of the centrosome outer core complex. The polypeptide is Centrin-1 (Toxoplasma gondii (strain ATCC 50611 / Me49)).